A 318-amino-acid polypeptide reads, in one-letter code: Protein teg (318 aa).

The PNPLA domain maps to 7-182 (ITFDGGGTLG…VATNTSTASI (176 aa)). The GXGXXG signature appears at 11–16 (GGGTLG). The short motif at 42 to 46 (GNSIG) is the GXSXG element. The active-site Nucleophile is the Ser-44. The active-site Proton acceptor is Asp-169.

Probable lipid hydrolase. In Priestia megaterium (strain ATCC 14581 / DSM 32 / CCUG 1817 / JCM 2506 / NBRC 15308 / NCIMB 9376 / NCTC 10342 / NRRL B-14308 / VKM B-512 / Ford 19) (Bacillus megaterium), this protein is Protein teg (teg).